The primary structure comprises 323 residues: Aspartate carbamoyltransferase catalytic subunit (323 aa).

Carbamoyl phosphate is bound by residues arginine 55 and threonine 56. Lysine 83 contacts L-aspartate. 3 residues coordinate carbamoyl phosphate: arginine 105, histidine 133, and glutamine 136. Arginine 166 and arginine 220 together coordinate L-aspartate. Residues glycine 261 and proline 262 each coordinate carbamoyl phosphate.

This sequence belongs to the aspartate/ornithine carbamoyltransferase superfamily. ATCase family. As to quaternary structure, heterododecamer (2C3:3R2) of six catalytic PyrB chains organized as two trimers (C3), and six regulatory PyrI chains organized as three dimers (R2).

It catalyses the reaction carbamoyl phosphate + L-aspartate = N-carbamoyl-L-aspartate + phosphate + H(+). The protein operates within pyrimidine metabolism; UMP biosynthesis via de novo pathway; (S)-dihydroorotate from bicarbonate: step 2/3. Catalyzes the condensation of carbamoyl phosphate and aspartate to form carbamoyl aspartate and inorganic phosphate, the committed step in the de novo pyrimidine nucleotide biosynthesis pathway. The chain is Aspartate carbamoyltransferase catalytic subunit from Acidothermus cellulolyticus (strain ATCC 43068 / DSM 8971 / 11B).